A 588-amino-acid polypeptide reads, in one-letter code: Peptidoglycan D,D-transpeptidase FtsI (588 aa).

The chain crosses the membrane as a helical span at residues 19–39 (FISWRFALLCGCILLALAFLL). Ser307 serves as the catalytic Acyl-ester intermediate. A propeptide spanning residues 578–588 (INQGEGTGGRS) is cleaved from the precursor.

It belongs to the transpeptidase family. FtsI subfamily.

It is found in the cell inner membrane. It carries out the reaction Preferential cleavage: (Ac)2-L-Lys-D-Ala-|-D-Ala. Also transpeptidation of peptidyl-alanyl moieties that are N-acyl substituents of D-alanine.. Its pathway is cell wall biogenesis; peptidoglycan biosynthesis. In terms of biological role, catalyzes cross-linking of the peptidoglycan cell wall at the division septum. The chain is Peptidoglycan D,D-transpeptidase FtsI from Escherichia coli O157:H7.